A 507-amino-acid chain; its full sequence is MAFNFGAPSGTSGTAAATAAPAGGFGGFGTTSTTAGSAFSFSAPTNTGTTGLFGGTQNKGFGFGTGFGTTTGTSTGLGTGLGTGLGFGGFNTQQQQQTTLGGLFSQPTQAPTQSNQLINTASALSAPTLLGDERDAILAKWNQLQAFWGTGKGYFNNNIPPVEFTQENPFCRFKAVGYSCMPSNKDEDGLVVLVFNKKETEIRSQQQQLVESLHKVLGGNQTLTVNVEGTKTLPDDQTEVVIYVVERSPNGTSRRVPATTLYAHFEQANIKTQLQQLGVTLSMTRTELSPAQIKQLLQNPPAGVDPIIWEQAKVDNPDSEKLIPVPMVGFKELLRRLKVQDQMTKQHQTRLDIISEDISELQKNQTTSVAKIAQYKRKLMDLSHRTLQVLIKQEIQRKSGYAIQADEEQLRVQLDTIQGELNAPTQFKGRLNELMSQIRMQNHFGAVRSEERYYIDADLLREIKQHLKQQQEGLSHLISIIKDDLEDIKLVEHGLNETIHIRGGVFS.

9 tandem repeats follow at residues 5–6, 25–26, 28–29, 53–54, 61–62, 63–64, 67–68, 87–88, and 444–445. A 9 X 2 AA repeats of F-G region spans residues 5–445; the sequence is FGAPSGTSGT…SQIRMQNHFG (441 aa).

The protein belongs to the NUP54 family. In terms of assembly, component of the p62 complex, a complex composed of NUP62, NUP54, and the isoform p58 and isoform p45 of NUP58. Interacts with NUTF2. Post-translationally, O-glycosylated.

It is found in the nucleus. Its subcellular location is the nuclear pore complex. The protein localises to the nucleus membrane. In terms of biological role, component of the nuclear pore complex, a complex required for the trafficking across the nuclear membrane. The chain is Nucleoporin p54 (NUP54) from Homo sapiens (Human).